A 140-amino-acid polypeptide reads, in one-letter code: Nucleoside diphosphate kinase (140 aa).

K11, F59, R87, T93, R104, and N114 together coordinate ATP. H117 functions as the Pros-phosphohistidine intermediate in the catalytic mechanism.

The protein belongs to the NDK family. As to quaternary structure, homotetramer. Mg(2+) is required as a cofactor.

The protein localises to the cytoplasm. It catalyses the reaction a 2'-deoxyribonucleoside 5'-diphosphate + ATP = a 2'-deoxyribonucleoside 5'-triphosphate + ADP. The enzyme catalyses a ribonucleoside 5'-diphosphate + ATP = a ribonucleoside 5'-triphosphate + ADP. Major role in the synthesis of nucleoside triphosphates other than ATP. The ATP gamma phosphate is transferred to the NDP beta phosphate via a ping-pong mechanism, using a phosphorylated active-site intermediate. The chain is Nucleoside diphosphate kinase from Acidiphilium cryptum (strain JF-5).